A 225-amino-acid polypeptide reads, in one-letter code: Large ribosomal subunit protein uL4 (225 aa).

A disordered region spans residues lysine 46 to arginine 102. Residues glycine 62–glycine 73 are compositionally biased toward basic residues.

The protein belongs to the universal ribosomal protein uL4 family. As to quaternary structure, part of the 50S ribosomal subunit.

Its function is as follows. One of the primary rRNA binding proteins, this protein initially binds near the 5'-end of the 23S rRNA. It is important during the early stages of 50S assembly. It makes multiple contacts with different domains of the 23S rRNA in the assembled 50S subunit and ribosome. In terms of biological role, forms part of the polypeptide exit tunnel. In Corynebacterium urealyticum (strain ATCC 43042 / DSM 7109), this protein is Large ribosomal subunit protein uL4.